Here is a 222-residue protein sequence, read N- to C-terminus: CASP-like protein 1E1 (222 aa).

Residues 1–59 (MEASRVKPGFNGVGMAAGSVNGSSRRPGPGLGYGYGYYMGSGAAAGGSGRAAQAPVDGC) lie on the Cytoplasmic side of the membrane. The chain crosses the membrane as a helical span at residues 60-80 (SVALRVFVVASTLVSAVVMGV). Over 81-110 (DRQTRTIQITITDALPPLEVPLTANWSYSS) the chain is Extracellular. Asn-105 carries an N-linked (GlcNAc...) asparagine glycan. A helical transmembrane segment spans residues 111-131 (AFVYFVVANAMVCLFSAAALA). Residues 132 to 146 (ACRSRAAMVPVMVGD) lie on the Cytoplasmic side of the membrane. A helical membrane pass occupies residues 147 to 167 (LLALALLYSAVGAAAEFGILG). Residues 168-189 (ERGNSHVRWAKVCNVYGRFCDR) are Extracellular-facing. The chain crosses the membrane as a helical span at residues 190–210 (AMAAVIVSLIGAFANLVLLML). The Cytoplasmic segment spans residues 211 to 222 (NILTIHKSSSYY).

The protein belongs to the Casparian strip membrane proteins (CASP) family. Homodimer and heterodimers.

The protein localises to the cell membrane. The sequence is that of CASP-like protein 1E1 from Sorghum bicolor (Sorghum).